Reading from the N-terminus, the 62-residue chain is E3 SUMO-protein ligase EGR2 (62 aa).

C2H2-type zinc fingers lie at residues 1–21 (AEGC…IRIH), 27–49 (FQCA…IRTH), and 55–62 (FACDYCGR).

This sequence belongs to the EGR C2H2-type zinc-finger protein family. In terms of assembly, interacts with HCFC1. Interacts with WWP2. Interacts with UBC9. Interacts with CITED1. Interacts (via phosphorylated form) with SFN. In terms of processing, ubiquitinated by WWP2 leading to proteasomal degradation. Post-translationally, acetylated. May be deacetylated by HDAC6, HDAC10 or SIRT1.

Its subcellular location is the nucleus. The protein operates within protein modification; protein sumoylation. Functionally, sequence-specific DNA-binding transcription factor. Plays a role in hindbrain segmentation by regulating the expression of a subset of homeobox containing genes and in Schwann cell myelination by regulating the expression of genes involved in the formation and maintenance of myelin. Binds to two EGR2-consensus sites EGR2A (5'-CTGTAGGAG-3') and EGR2B (5'-ATGTAGGTG-3') in the HOXB3 enhancer and promotes HOXB3 transcriptional activation. Binds to specific DNA sites located in the promoter region of HOXA4, HOXB2 and ERBB2. Regulates hindbrain segmentation by controlling the expression of Hox genes, such as HOXA4, HOXB3 and HOXB2, and thereby specifying odd and even rhombomeres. Promotes the expression of HOXB3 in the rhombomere r5 in the hindbrain. Regulates myelination in the peripheral nervous system after birth, possibly by regulating the expression of myelin proteins, such as MPZ, and by promoting the differentiation of Schwann cells. Involved in the development of the jaw openener musculature, probably by playing a role in its innervation through trigeminal motor neurons. May play a role in adipogenesis, possibly by regulating the expression of CEBPB. In terms of biological role, E3 SUMO-protein ligase helping SUMO1 conjugation to its coregulators NAB1 and NAB2, whose sumoylation down-regulates EGR2 transcriptional activity. The chain is E3 SUMO-protein ligase EGR2 (EGR2) from Cerdocyon thous (Crab-eating fox).